The primary structure comprises 815 residues: SNF1 protein kinase subunit beta-1 (815 aa).

Over residues 1-11 (MGNSPSTQDPS) the composition is skewed to polar residues. 2 disordered regions span residues 1 to 88 (MGNS…TIDK) and 120 to 146 (HDVGAPEEQVKSPSFLSPGPSMATVKR). Residue Gly-2 is the site of N-myristoyl glycine attachment. Residues 12 to 31 (HSTKKEHGHHFHDAFNKDRQ) show a composition bias toward basic and acidic residues. Residues 32–42 (GSITSQLFNNR) are compositionally biased toward polar residues. Ser-33 carries the phosphoserine modification. 2 stretches are compositionally biased toward basic and acidic residues: residues 72–88 (PSTDCDGRMSSDTTIDK) and 120–129 (HDVGAPEEQV). Residues Ser-181, Ser-198, Ser-200, Ser-206, Ser-209, and Ser-220 each carry the phosphoserine modification. 3 disordered regions span residues 311-335 (HANNNGNIENNTRNKGNAGGSNDDF), 363-389 (HHNKTKKAQSKKIRSASNSRRSSFASL), and 410-444 (PLHPIINDNESQYSAPQHREISHHSNSMSSMSSIS). Residues 313–326 (NNNGNIENNTRNKG) are compositionally biased toward low complexity. The residue at position 331 (Ser-331) is a Phosphoserine. The span at 363–376 (HHNKTKKAQSKKIR) shows a compositional bias: basic residues. 2 stretches are compositionally biased toward low complexity: residues 377 to 389 (SASNSRRSSFASL) and 433 to 444 (HSNSMSSMSSIS). The interval 473–716 (VSTDIASALK…LQQGGNIDAE (244 aa)) is kinase-interacting sequence (KIS); required for interaction with SNF1. A phosphoserine mark is found at Ser-494 and Ser-497. The interval 581-616 (EPTLDEELPKRPELKRFPSSSRKSSYYSAKGVERPS) is disordered. Residues 587–596 (ELPKRPELKR) are compositionally biased toward basic and acidic residues. Low complexity predominate over residues 599 to 608 (SSSRKSSYYS). Ser-643 carries the post-translational modification Phosphoserine. The interval 724–804 (SRYPVPDLPI…FITQVVYAPC (81 aa)) is association with SNF1 kinase complex (ASC) domain; required for interaction with SNF4.

The protein belongs to the 5'-AMP-activated protein kinase beta subunit family. In terms of assembly, component of the SNF1 kinase complex, a heterotrimeric complex composed of the catalytic alpha subunit SNF1, one of the three related beta subunits SIP1, SIP2 or GAL83, and the regulatory gamma subunit SNF4. The beta subunit serves as a bridge between the catalytic and the regulatory subunit. Interacts (via KIS domain) with SNF1. Interacts (via ASC domain) with SNF4. Post-translationally, phosphorylated by SNF1 in vitro.

It localises to the cytoplasm. It is found in the vacuole membrane. In terms of biological role, beta subunit of the SNF1 kinase complex, which is required for transcriptional, metabolic, and developmental adaptations in response to glucose limitation. Has a structural role, mediating heterotrimer formation, and a regulatory role, defining carbon source-regulated subcellular location and substrate specificity of the SNF1 kinase complex. Promotes the PKA-regulated relocalization of the SNF1 kinase complex to the vacuolar membrane in response to various types of carbon stress. The polypeptide is SNF1 protein kinase subunit beta-1 (SIP1) (Saccharomyces cerevisiae (strain RM11-1a) (Baker's yeast)).